Consider the following 59-residue polypeptide: Large ribosomal subunit protein bL32c (59 aa).

This sequence belongs to the bacterial ribosomal protein bL32 family.

The protein resides in the plastid. It is found in the chloroplast. In Physcomitrium patens (Spreading-leaved earth moss), this protein is Large ribosomal subunit protein bL32c.